A 209-amino-acid chain; its full sequence is Small ribosomal subunit protein uS4 (209 aa).

Residues 98–158 (SRVDNIVYRL…EKSRSLAAIK (61 aa)) enclose the S4 RNA-binding domain.

This sequence belongs to the universal ribosomal protein uS4 family. As to quaternary structure, part of the 30S ribosomal subunit. Contacts protein S5. The interaction surface between S4 and S5 is involved in control of translational fidelity.

In terms of biological role, one of the primary rRNA binding proteins, it binds directly to 16S rRNA where it nucleates assembly of the body of the 30S subunit. With S5 and S12 plays an important role in translational accuracy. The sequence is that of Small ribosomal subunit protein uS4 from Pseudothermotoga lettingae (strain ATCC BAA-301 / DSM 14385 / NBRC 107922 / TMO) (Thermotoga lettingae).